Reading from the N-terminus, the 81-residue chain is RNA-binding protein Hfq (81 aa).

In terms of domain architecture, Sm spans 10-69; the sequence is DPFLNTLRREHVPVSIYLVNGIKLQGQIESFDQYVVLLRNTVTQMVYKHAISTIVPGRAV.

It belongs to the Hfq family. As to quaternary structure, homohexamer.

Functionally, RNA chaperone that binds small regulatory RNA (sRNAs) and mRNAs to facilitate mRNA translational regulation in response to envelope stress, environmental stress and changes in metabolite concentrations. Also binds with high specificity to tRNAs. The chain is RNA-binding protein Hfq from Variovorax paradoxus (strain S110).